Reading from the N-terminus, the 295-residue chain is Acetyl-coenzyme A carboxylase carboxyl transferase subunit beta (295 aa).

Residues Met1–Lys20 are disordered. A CoA carboxyltransferase N-terminal domain is found at Leu28–Ala295. 4 residues coordinate Zn(2+): Cys32, Cys35, Cys51, and Cys54. The segment at Cys32–Cys54 adopts a C4-type zinc-finger fold.

The protein belongs to the AccD/PCCB family. As to quaternary structure, acetyl-CoA carboxylase is a heterohexamer composed of biotin carboxyl carrier protein (AccB), biotin carboxylase (AccC) and two subunits each of ACCase subunit alpha (AccA) and ACCase subunit beta (AccD). The cofactor is Zn(2+).

It localises to the cytoplasm. The catalysed reaction is N(6)-carboxybiotinyl-L-lysyl-[protein] + acetyl-CoA = N(6)-biotinyl-L-lysyl-[protein] + malonyl-CoA. The protein operates within lipid metabolism; malonyl-CoA biosynthesis; malonyl-CoA from acetyl-CoA: step 1/1. Functionally, component of the acetyl coenzyme A carboxylase (ACC) complex. Biotin carboxylase (BC) catalyzes the carboxylation of biotin on its carrier protein (BCCP) and then the CO(2) group is transferred by the transcarboxylase to acetyl-CoA to form malonyl-CoA. In Xanthomonas axonopodis pv. citri (strain 306), this protein is Acetyl-coenzyme A carboxylase carboxyl transferase subunit beta.